The sequence spans 264 residues: Tryptophan synthase alpha chain (264 aa).

Catalysis depends on proton acceptor residues Glu-45 and Asp-56.

The protein belongs to the TrpA family. Tetramer of two alpha and two beta chains.

It carries out the reaction (1S,2R)-1-C-(indol-3-yl)glycerol 3-phosphate + L-serine = D-glyceraldehyde 3-phosphate + L-tryptophan + H2O. It participates in amino-acid biosynthesis; L-tryptophan biosynthesis; L-tryptophan from chorismate: step 5/5. Its function is as follows. The alpha subunit is responsible for the aldol cleavage of indoleglycerol phosphate to indole and glyceraldehyde 3-phosphate. In Leptospira borgpetersenii serovar Hardjo-bovis (strain JB197), this protein is Tryptophan synthase alpha chain.